The chain runs to 405 residues: L-rhamnonate dehydratase (405 aa).

The substrate site is built by His-33 and Arg-59. Positions 226, 252, and 280 each coordinate Mg(2+). Residue His-329 is the Proton acceptor of the active site. Residue Glu-349 coordinates substrate.

This sequence belongs to the mandelate racemase/muconate lactonizing enzyme family. RhamD subfamily. Homooctamer; tetramer of dimers. It depends on Mg(2+) as a cofactor.

It catalyses the reaction L-rhamnonate = 2-dehydro-3-deoxy-L-rhamnonate + H2O. Catalyzes the dehydration of L-rhamnonate to 2-keto-3-deoxy-L-rhamnonate (KDR). The polypeptide is L-rhamnonate dehydratase (Escherichia coli (strain SMS-3-5 / SECEC)).